Here is a 452-residue protein sequence, read N- to C-terminus: UDP-N-acetylmuramoylalanine--D-glutamate ligase (452 aa).

Position 119-125 (119-125) interacts with ATP; it reads GSNGKTT.

The protein belongs to the MurCDEF family.

It localises to the cytoplasm. The enzyme catalyses UDP-N-acetyl-alpha-D-muramoyl-L-alanine + D-glutamate + ATP = UDP-N-acetyl-alpha-D-muramoyl-L-alanyl-D-glutamate + ADP + phosphate + H(+). Its pathway is cell wall biogenesis; peptidoglycan biosynthesis. In terms of biological role, cell wall formation. Catalyzes the addition of glutamate to the nucleotide precursor UDP-N-acetylmuramoyl-L-alanine (UMA). The sequence is that of UDP-N-acetylmuramoylalanine--D-glutamate ligase from Streptococcus equi subsp. zooepidemicus (strain MGCS10565).